Reading from the N-terminus, the 673-residue chain is Vasorin (673 aa).

The first 23 residues, 1–23 (MCSRVPLLLPLLLLLALGPGVQG), serve as a signal peptide directing secretion. Residues 24-51 (CPSGCQCSQPQTVFCTARQGTTVPRDVP) form the LRRNT domain. Over 24-575 (CPSGCQCSQP…VTQAREGNLP (552 aa)) the chain is Extracellular. LRR repeat units follow at residues 52–74 (PDTVGLYVFENGITMLDAGSFAG), 77–98 (GLQLLDLSQNQIASLPSGVFQP), 101–122 (NLSNLDLTANRLHEITNETFRG), 125–146 (RLERLYLGKNRIRHIQPGAFDT), 149–170 (RLLELKLQDNELRALPPLRLPR), 171–191 (LLLLDLSHNSLLALEPGILDT), 193–214 (NVEALRLAGLGLQQLDEGLFSR), 217–238 (NLHDLDVSDNQLERVPPVIRGL), 240–262 (GLTRLRLAGNTRIAQLRPEDLAG), and 265–287 (ALQELDVSNLSLQALPGDLSGLF). Asparagine 101 carries an N-linked (GlcNAc...) asparagine glycan. A glycan (N-linked (GlcNAc...) (complex) asparagine) is linked at asparagine 117. An N-linked (GlcNAc...) asparagine glycan is attached at asparagine 273. Residues 298 to 351 (NPFNCVCPLSWFGPWVRESHVTLASPEETRCHFPPKNAGRLLLELDYADFGCPA) form the LRRCT domain. Residues 358–370 (VPTTRPVVREPTA) show a composition bias toward low complexity. The interval 358 to 404 (VPTTRPVVREPTALSSSLAPTWLSPTEPATEAPSPPSTAPPTVGPVP) is disordered. Over residues 390-404 (PSPPSTAPPTVGPVP) the composition is skewed to pro residues. Positions 405-442 (QPQDCPPSTCLNGGTCHLGTRHHLACLCPEGFTGLYCE) constitute an EGF-like domain. Cystine bridges form between cysteine 409/cysteine 420, cysteine 414/cysteine 430, and cysteine 432/cysteine 441. The Fibronectin type-III domain occupies 460–558 (PPRSLTLGIE…ACGEAHTPPA (99 aa)). Residues asparagine 500 and asparagine 528 are each glycosylated (N-linked (GlcNAc...) asparagine). The chain crosses the membrane as a helical span at residues 576 to 596 (LLIAPALAAVLLAALAAVGAA). The Cytoplasmic segment spans residues 597–673 (YCVRRGRAMA…QSPLHAKPYI (77 aa)).

In terms of assembly, interacts with TGFB1, TGFB2 and TGFB3. Post-translationally, N-glycosylated. N-glycan heterogeneity at Asn-117: Hex5HexNAc4 (minor), dHex1Hex5HexNAc4 (major), Hex6HexNAc5 (minor) and dHex1Hex6HexNAc5 (minor). Expressed at highest levels in aorta, at intermediate levels in kidney and placenta and at lowest levels in brain, heart, liver, lung and skeletal muscle. Within the aorta, the strongest expression is found in the tunica media of the proximal ascending aorta, the descending thoracic aorta, the abdominal aorta and the coronary arteries. Within the kidney, expression is found in the interstitial cells.

Its subcellular location is the membrane. It is found in the secreted. Functionally, may act as an inhibitor of TGF-beta signaling. The protein is Vasorin (VASN) of Homo sapiens (Human).